The primary structure comprises 61 residues: Small ribosomal subunit protein uS14B (61 aa).

Positions 24, 27, 40, and 43 each coordinate Zn(2+).

The protein belongs to the universal ribosomal protein uS14 family. Zinc-binding uS14 subfamily. In terms of assembly, part of the 30S ribosomal subunit. Contacts proteins S3 and S10. The cofactor is Zn(2+).

Its function is as follows. Binds 16S rRNA, required for the assembly of 30S particles and may also be responsible for determining the conformation of the 16S rRNA at the A site. This is Small ribosomal subunit protein uS14B from Mycolicibacterium smegmatis (strain ATCC 700084 / mc(2)155) (Mycobacterium smegmatis).